A 366-amino-acid polypeptide reads, in one-letter code: Chorismate synthase (366 aa).

NADP(+) is bound at residue arginine 48. FMN contacts are provided by residues 125-127, 241-242, glycine 285, 300-304, and arginine 326; these read RSS, NA, and KPTSS.

It belongs to the chorismate synthase family. Homotetramer. FMNH2 serves as cofactor.

It carries out the reaction 5-O-(1-carboxyvinyl)-3-phosphoshikimate = chorismate + phosphate. Its pathway is metabolic intermediate biosynthesis; chorismate biosynthesis; chorismate from D-erythrose 4-phosphate and phosphoenolpyruvate: step 7/7. Catalyzes the anti-1,4-elimination of the C-3 phosphate and the C-6 proR hydrogen from 5-enolpyruvylshikimate-3-phosphate (EPSP) to yield chorismate, which is the branch point compound that serves as the starting substrate for the three terminal pathways of aromatic amino acid biosynthesis. This reaction introduces a second double bond into the aromatic ring system. The polypeptide is Chorismate synthase (Ruegeria pomeroyi (strain ATCC 700808 / DSM 15171 / DSS-3) (Silicibacter pomeroyi)).